A 129-amino-acid chain; its full sequence is Glycine cleavage system H protein (129 aa).

Positions 24 to 106 constitute a Lipoyl-binding domain; that stretch reads TFTVGISEHA…YGDGWLFRIK (83 aa). K65 carries the N6-lipoyllysine modification.

Belongs to the GcvH family. The glycine cleavage system is composed of four proteins: P, T, L and H. Requires (R)-lipoate as cofactor.

Functionally, the glycine cleavage system catalyzes the degradation of glycine. The H protein shuttles the methylamine group of glycine from the P protein to the T protein. This is Glycine cleavage system H protein from Pseudoalteromonas atlantica (strain T6c / ATCC BAA-1087).